A 600-amino-acid chain; its full sequence is UvrABC system protein C (600 aa).

One can recognise a GIY-YIG domain in the interval 15-100 (NSAGVYEYFN…IKQLHPKYNI (86 aa)). The 36-residue stretch at 203–238 (SVLLKNLEKQMLVLAQNENYEEAAKIRDQIATIKDL) folds into the UVR domain.

This sequence belongs to the UvrC family. In terms of assembly, interacts with UvrB in an incision complex.

The protein localises to the cytoplasm. The UvrABC repair system catalyzes the recognition and processing of DNA lesions. UvrC both incises the 5' and 3' sides of the lesion. The N-terminal half is responsible for the 3' incision and the C-terminal half is responsible for the 5' incision. The sequence is that of UvrABC system protein C from Campylobacter jejuni subsp. doylei (strain ATCC BAA-1458 / RM4099 / 269.97).